Consider the following 88-residue polypeptide: Putative membrane protein insertion efficiency factor (88 aa).

This sequence belongs to the UPF0161 family.

It is found in the cell membrane. Its function is as follows. Could be involved in insertion of integral membrane proteins into the membrane. The protein is Putative membrane protein insertion efficiency factor of Exiguobacterium sibiricum (strain DSM 17290 / CCUG 55495 / CIP 109462 / JCM 13490 / 255-15).